A 119-amino-acid polypeptide reads, in one-letter code: Protein TusC (119 aa).

The protein belongs to the DsrF/TusC family. In terms of assembly, heterohexamer, formed by a dimer of trimers. The hexameric TusBCD complex contains 2 copies each of TusB, TusC and TusD. The TusBCD complex interacts with TusE.

The protein localises to the cytoplasm. Part of a sulfur-relay system required for 2-thiolation of 5-methylaminomethyl-2-thiouridine (mnm(5)s(2)U) at tRNA wobble positions. This chain is Protein TusC, found in Pectobacterium atrosepticum (strain SCRI 1043 / ATCC BAA-672) (Erwinia carotovora subsp. atroseptica).